The following is a 303-amino-acid chain: Putative S-adenosyl-L-methionine-dependent methyltransferase MSMEG_1479/MSMEI_1443 (303 aa).

S-adenosyl-L-methionine is bound by residues D130 and 159 to 160; that span reads DL.

It belongs to the UPF0677 family.

Functionally, exhibits S-adenosyl-L-methionine-dependent methyltransferase activity. This chain is Putative S-adenosyl-L-methionine-dependent methyltransferase MSMEG_1479/MSMEI_1443, found in Mycolicibacterium smegmatis (strain ATCC 700084 / mc(2)155) (Mycobacterium smegmatis).